The chain runs to 235 residues: Sugar fermentation stimulation protein homolog (235 aa).

It belongs to the SfsA family.

This chain is Sugar fermentation stimulation protein homolog, found in Allorhizobium ampelinum (strain ATCC BAA-846 / DSM 112012 / S4) (Agrobacterium vitis (strain S4)).